The chain runs to 195 residues: MDITFNTGLMGSGKSKKLIDDYLIDPKEKVALSVSLTEDTFSRGKIESRDGRSLRSINLNRDQFKQNISLLEIIIFMTNTQTIYIDESQFLPKETVEKFVSLSESYHVPIHFYGLDLTFTGELFDSSSHLLTILPSENINRISRGCEASKCSKIAQYNARIVDGKVSRSGETFVEEKSYYLALCSDHYYNDEKII.

ATP contacts are provided by residues 8–15 (GLMGSGKS) and 86–89 (DESQ). Residue E87 is the Proton acceptor of the active site. Positions 146, 151, 184, and 187 each coordinate Zn(2+).

Belongs to the thymidine kinase family. In terms of assembly, homotetramer.

It localises to the cytoplasm. It catalyses the reaction thymidine + ATP = dTMP + ADP + H(+). The polypeptide is Thymidine kinase (tdk) (Bacillus subtilis subsp. natto).